Here is a 159-residue protein sequence, read N- to C-terminus: Phosphopantetheine adenylyltransferase (159 aa).

T10 is a binding site for substrate. ATP-binding positions include T10–F11 and H18. Substrate-binding residues include K42, L74, and R88. Residues G89–R91, E99, and Y124–S130 contribute to the ATP site.

The protein belongs to the bacterial CoaD family. As to quaternary structure, homohexamer. The cofactor is Mg(2+).

It is found in the cytoplasm. It carries out the reaction (R)-4'-phosphopantetheine + ATP + H(+) = 3'-dephospho-CoA + diphosphate. The protein operates within cofactor biosynthesis; coenzyme A biosynthesis; CoA from (R)-pantothenate: step 4/5. In terms of biological role, reversibly transfers an adenylyl group from ATP to 4'-phosphopantetheine, yielding dephospho-CoA (dPCoA) and pyrophosphate. This chain is Phosphopantetheine adenylyltransferase, found in Hydrogenovibrio crunogenus (strain DSM 25203 / XCL-2) (Thiomicrospira crunogena).